Reading from the N-terminus, the 95-residue chain is Small ribosomal subunit protein uS15 (95 aa).

The protein belongs to the universal ribosomal protein uS15 family. In terms of assembly, part of the 30S ribosomal subunit. Forms a bridge to the 50S subunit in the 70S ribosome, contacting the 23S rRNA.

Functionally, one of the primary rRNA binding proteins, it binds directly to 16S rRNA where it helps nucleate assembly of the platform of the 30S subunit by binding and bridging several RNA helices of the 16S rRNA. Its function is as follows. Forms an intersubunit bridge (bridge B4) with the 23S rRNA of the 50S subunit in the ribosome. The sequence is that of Small ribosomal subunit protein uS15 from Sulfurihydrogenibium sp. (strain YO3AOP1).